The following is a 490-amino-acid chain: MSRMAEQQLYIHGGYTSATSGRTFETINPANGNVLATVQAAGREDVDRAVKSAQQGQKIWAAMTAMERSRILRRAVDILRERNDELAKLETLDTGKAYSETSTVDIVTGADVLEYYAGLIPALEGSQIPLRETSFVYTRREPLGVVAGIGAWNYPIQIALWKSAPALAAGNAMIFKPSEVTPLTALKLAEIYSEAGLPDGVFNVLPGVGAETGQYLTEHPGIAKVSFTGGVASGKKVMANSAASSLKEVTMELGGKSPLIVFDDADLDLAADIAMMANFFSSGQVCTNGTRVFVPAKCKAAFEQKILARVERIRAGDVFDPQTNFGPLVSFPHRDNVLRYIAKGQEEGARVLCGGDVLKGDGFDNGAWVAPTVFTDCRDDMTIVREEIFGPVMSILTYETEDEVIRRANDTDYGLAAGIVTADLNRAHRVIHQLEAGICWINTWGESPAEMPVGGYKHSGIGRENGVMTLQSYTQVKSIQVEMAKFQSIF.

Residues Thr26, Ile27, and Asp93 each coordinate K(+). NAD(+) is bound at residue 150–152 (GAW). The active-site Charge relay system is the Lys162. 176–179 (KPSE) is a binding site for NAD(+). Val180 is a K(+) binding site. Position 230-233 (230-233 (GVAS)) interacts with NAD(+). Leu246 provides a ligand contact to K(+). Glu252 functions as the Proton acceptor in the catalytic mechanism. Gly254, Cys286, and Glu387 together coordinate NAD(+). Residue Cys286 is the Nucleophile of the active site. Position 286 is a cysteine sulfenic acid (-SOH) (Cys286). The K(+) site is built by Lys457 and Gly460. Glu464 acts as the Charge relay system in catalysis.

Belongs to the aldehyde dehydrogenase family. As to quaternary structure, dimer of dimers. K(+) serves as cofactor.

It carries out the reaction betaine aldehyde + NAD(+) + H2O = glycine betaine + NADH + 2 H(+). Its pathway is amine and polyamine biosynthesis; betaine biosynthesis via choline pathway; betaine from betaine aldehyde: step 1/1. In terms of biological role, involved in the biosynthesis of the osmoprotectant glycine betaine. Catalyzes the irreversible oxidation of betaine aldehyde to the corresponding acid. The sequence is that of Betaine aldehyde dehydrogenase from Escherichia coli O9:H4 (strain HS).